Consider the following 58-residue polypeptide: MAGPESDAQYQFTGIKKYFNSYTLTGRMNCVLATYGSIALIVLYFKLRSKKTPAVKAT.

K16 and K17 each carry N6-acetyllysine. The helical transmembrane segment at T23–F45 threads the bilayer.

Component of the ATP synthase complex composed at least of ATP5F1A/subunit alpha, ATP5F1B/subunit beta, ATP5MC1/subunit c (homooctomer), MT-ATP6/subunit a, MT-ATP8/subunit 8, ATP5ME/subunit e, ATP5MF/subunit f, ATP5MG/subunit g, ATP5MK/subunit k, ATP5MJ/subunit j, ATP5F1C/subunit gamma, ATP5F1D/subunit delta, ATP5F1E/subunit epsilon, ATP5PF/subunit F6, ATP5PB/subunit b, ATP5PD/subunit d, ATP5PO/subunit OSCP. ATP synthase complex consists of a soluble F(1) head domain (subunits alpha(3) and beta(3)) - the catalytic core - and a membrane F(0) domain - the membrane proton channel (subunits c, a, 8, e, f, g, k and j). These two domains are linked by a central stalk (subunits gamma, delta, and epsilon) rotating inside the F1 region and a stationary peripheral stalk (subunits F6, b, d, and OSCP). The ATP synthase complex/complex V exists as a monomeric and a dimeric supercomplex that helps shape mitochondrial cristae to optimize proton flow.

The protein resides in the mitochondrion membrane. Subunit k, of the mitochondrial membrane ATP synthase complex (F(1)F(0) ATP synthase or Complex V) that produces ATP from ADP in the presence of a proton gradient across the membrane which is generated by electron transport complexes of the respiratory chain. ATP synthase complex consist of a soluble F(1) head domain - the catalytic core - and a membrane F(1) domain - the membrane proton channel. These two domains are linked by a central stalk rotating inside the F(1) region and a stationary peripheral stalk. During catalysis, ATP synthesis in the catalytic domain of F(1) is coupled via a rotary mechanism of the central stalk subunits to proton translocation. In vivo, can only synthesize ATP although its ATP hydrolase activity can be activated artificially in vitro. Part of the complex F(0) domain. Required for dimerization of the ATP synthase complex and as such regulates ATP synthesis in the mitochondria. The chain is ATP synthase F(0) complex subunit k, mitochondrial from Homo sapiens (Human).